A 78-amino-acid polypeptide reads, in one-letter code: Beta sliding clamp (78 aa).

The protein belongs to the beta sliding clamp family. Forms a ring-shaped head-to-tail homodimer around DNA which binds and tethers DNA polymerases and other proteins to the DNA. The DNA replisome complex has a single clamp-loading complex (3 tau and 1 each of delta, delta', psi and chi subunits) which binds 3 Pol III cores (1 core on the leading strand and 2 on the lagging strand) each with a beta sliding clamp dimer. Additional proteins in the replisome are other copies of gamma, psi and chi, Ssb, DNA helicase and RNA primase.

The protein resides in the cytoplasm. Confers DNA tethering and processivity to DNA polymerases and other proteins. Acts as a clamp, forming a ring around DNA (a reaction catalyzed by the clamp-loading complex) which diffuses in an ATP-independent manner freely and bidirectionally along dsDNA. Initially characterized for its ability to contact the catalytic subunit of DNA polymerase III (Pol III), a complex, multichain enzyme responsible for most of the replicative synthesis in bacteria; Pol III exhibits 3'-5' exonuclease proofreading activity. The beta chain is required for initiation of replication as well as for processivity of DNA replication. This chain is Beta sliding clamp (dnaN), found in Serratia marcescens.